The sequence spans 157 residues: Transcriptional repressor NrdR (157 aa).

A zinc finger lies at 3–34 (CPSCQNTDSRVLESRSADAGKCVRRRRECLNC). One can recognise an ATP-cone domain in the interval 49–139 (VTVIKRSNAK…VYRQFNGIED (91 aa)).

The protein belongs to the NrdR family. Zn(2+) serves as cofactor.

Its function is as follows. Negatively regulates transcription of bacterial ribonucleotide reductase nrd genes and operons by binding to NrdR-boxes. The sequence is that of Transcriptional repressor NrdR from Prochlorococcus marinus (strain SARG / CCMP1375 / SS120).